Reading from the N-terminus, the 543-residue chain is Bifunctional purine biosynthesis protein PurH (543 aa).

Positions 5-151 constitute an MGS-like domain; the sequence is NHARPIRRAL…KNHKDVTIVV (147 aa).

It belongs to the PurH family.

It catalyses the reaction (6R)-10-formyltetrahydrofolate + 5-amino-1-(5-phospho-beta-D-ribosyl)imidazole-4-carboxamide = 5-formamido-1-(5-phospho-D-ribosyl)imidazole-4-carboxamide + (6S)-5,6,7,8-tetrahydrofolate. The enzyme catalyses IMP + H2O = 5-formamido-1-(5-phospho-D-ribosyl)imidazole-4-carboxamide. It functions in the pathway purine metabolism; IMP biosynthesis via de novo pathway; 5-formamido-1-(5-phospho-D-ribosyl)imidazole-4-carboxamide from 5-amino-1-(5-phospho-D-ribosyl)imidazole-4-carboxamide (10-formyl THF route): step 1/1. It participates in purine metabolism; IMP biosynthesis via de novo pathway; IMP from 5-formamido-1-(5-phospho-D-ribosyl)imidazole-4-carboxamide: step 1/1. The chain is Bifunctional purine biosynthesis protein PurH from Shewanella oneidensis (strain ATCC 700550 / JCM 31522 / CIP 106686 / LMG 19005 / NCIMB 14063 / MR-1).